The following is a 149-amino-acid chain: 3-dehydroquinate dehydratase (149 aa).

Tyrosine 26 serves as the catalytic Proton acceptor. Substrate-binding residues include asparagine 77, histidine 83, and aspartate 90. The Proton donor role is filled by histidine 103. Substrate is bound by residues 104–105 (LS) and arginine 114.

It belongs to the type-II 3-dehydroquinase family. In terms of assembly, homododecamer.

The enzyme catalyses 3-dehydroquinate = 3-dehydroshikimate + H2O. The protein operates within metabolic intermediate biosynthesis; chorismate biosynthesis; chorismate from D-erythrose 4-phosphate and phosphoenolpyruvate: step 3/7. Functionally, catalyzes a trans-dehydration via an enolate intermediate. The protein is 3-dehydroquinate dehydratase of Vibrio parahaemolyticus serotype O3:K6 (strain RIMD 2210633).